Here is a 424-residue protein sequence, read N- to C-terminus: S-adenosylmethionine synthase (424 aa).

Residue His16 participates in ATP binding. Asp18 is a binding site for Mg(2+). Residue Glu44 coordinates K(+). L-methionine contacts are provided by Glu57 and Gln100. A flexible loop region spans residues 100–110 (QSPDIAQGVNT). ATP-binding positions include 175-177 (DGK), 251-252 (KF), Asp260, 266-267 (RK), Ala283, and Lys287. Residue Asp260 participates in L-methionine binding. Lys291 contributes to the L-methionine binding site.

Belongs to the AdoMet synthase family. In terms of assembly, homotetramer; dimer of dimers. Mg(2+) is required as a cofactor. The cofactor is K(+).

The protein localises to the cytoplasm. The enzyme catalyses L-methionine + ATP + H2O = S-adenosyl-L-methionine + phosphate + diphosphate. It participates in amino-acid biosynthesis; S-adenosyl-L-methionine biosynthesis; S-adenosyl-L-methionine from L-methionine: step 1/1. Functionally, catalyzes the formation of S-adenosylmethionine (AdoMet) from methionine and ATP. The overall synthetic reaction is composed of two sequential steps, AdoMet formation and the subsequent tripolyphosphate hydrolysis which occurs prior to release of AdoMet from the enzyme. The protein is S-adenosylmethionine synthase of Nostoc punctiforme (strain ATCC 29133 / PCC 73102).